A 176-amino-acid chain; its full sequence is Small ribosomal subunit protein uS5 (176 aa).

Residues 11–74 (LSEVLVDVNR…QAAKKRMMKV (64 aa)) form the S5 DRBM domain.

It belongs to the universal ribosomal protein uS5 family. In terms of assembly, part of the 30S ribosomal subunit. Contacts proteins S4 and S8.

With S4 and S12 plays an important role in translational accuracy. Its function is as follows. Located at the back of the 30S subunit body where it stabilizes the conformation of the head with respect to the body. The chain is Small ribosomal subunit protein uS5 from Rickettsia peacockii (strain Rustic).